A 114-amino-acid chain; its full sequence is Acetyltransferase At1g77540 (114 aa).

Residue threonine 2 is modified to N-acetylthreonine. The region spanning 18-106 (KIVWNEGKRR…RNPSWKPLIH (89 aa)) is the N-acetyltransferase domain. CoA-binding positions include 52-55 (HTYV) and 61-66 (GLGLAS). The active-site Nucleophile is the cysteine 87. CoA is bound by residues 88-89 (SY), threonine 93, and arginine 97.

Its subcellular location is the peroxisome. Functionally, possesses in vitro histone acetyltransferase activity with histones H3 and H4. The protein is Acetyltransferase At1g77540 of Arabidopsis thaliana (Mouse-ear cress).